Consider the following 608-residue polypeptide: Albumin 1 (608 aa).

A signal peptide spans 1–14 (MQWLSVCSLLVLLS). Positions 15–18 (VLSR) are excised as a propeptide. Albumin domains lie at 19–205 (SQAQ…TFQH), 206–398 (AVMK…AGSD), and 402–600 (KITD…KLVS). Disulfide bonds link cysteine 26/cysteine 72, cysteine 71/cysteine 80, cysteine 93/cysteine 108, cysteine 107/cysteine 118, cysteine 142/cysteine 187, cysteine 186/cysteine 195, cysteine 218/cysteine 264, cysteine 263/cysteine 271, cysteine 283/cysteine 299, cysteine 298/cysteine 309, cysteine 336/cysteine 381, cysteine 380/cysteine 389, cysteine 414/cysteine 460, cysteine 459/cysteine 471, cysteine 484/cysteine 500, cysteine 499/cysteine 510, cysteine 537/cysteine 582, and cysteine 581/cysteine 590. N-linked (GlcNAc...) asparagine glycosylation occurs at asparagine 501.

This sequence belongs to the ALB/AFP/VDB family. Plasma.

Its subcellular location is the secreted. Its function is as follows. Binds water, Ca(2+), Na(+), K(+), fatty acids, hormones, bilirubin and drugs. Its main function is the regulation of the colloidal osmotic pressure of blood. The polypeptide is Albumin 1 (alb1) (Salmo salar (Atlantic salmon)).